A 162-amino-acid chain; its full sequence is MLYALQWRKYMVEENNNEELRHLVRIMNTDLQGAKPVQYALTGLPGVGRRTAKLIAKGAGVDPSAILGYLPEEEVAKLDTAIGKFEDIVPSWMLNRQKDLATGQDKHLLGTDILLTFREDINNLKKVRAYRGLRHERGLKVRGQRTKSTGRRGSTVGVSRKK.

The tract at residues 142-162 is disordered; it reads RGQRTKSTGRRGSTVGVSRKK.

It belongs to the universal ribosomal protein uS13 family. Part of the 30S ribosomal subunit. Forms a loose heterodimer with protein S19. Forms two bridges to the 50S subunit in the 70S ribosome.

Its function is as follows. Located at the top of the head of the 30S subunit, it contacts several helices of the 16S rRNA. In the 70S ribosome it contacts the 23S rRNA (bridge B1a) and protein L5 of the 50S subunit (bridge B1b), connecting the 2 subunits; these bridges are implicated in subunit movement. The protein is Small ribosomal subunit protein uS13 of Methanosarcina acetivorans (strain ATCC 35395 / DSM 2834 / JCM 12185 / C2A).